Consider the following 172-residue polypeptide: Small ribosomal subunit protein uS5 (172 aa).

An S5 DRBM domain is found at 16 to 79; the sequence is LKDRLVAINR…ESAKKNLTRV (64 aa).

This sequence belongs to the universal ribosomal protein uS5 family. As to quaternary structure, part of the 30S ribosomal subunit. Contacts proteins S4 and S8.

In terms of biological role, with S4 and S12 plays an important role in translational accuracy. Functionally, located at the back of the 30S subunit body where it stabilizes the conformation of the head with respect to the body. This is Small ribosomal subunit protein uS5 from Bacteroides fragilis (strain ATCC 25285 / DSM 2151 / CCUG 4856 / JCM 11019 / LMG 10263 / NCTC 9343 / Onslow / VPI 2553 / EN-2).